An 87-amino-acid chain; its full sequence is Phosphocarrier protein HPr (87 aa).

Residues 1–87 form the HPr domain; sequence MAEKTFTITA…EEVIKEGLGE (87 aa). Residue His-15 is the Pros-phosphohistidine intermediate of the active site. Ser-46 bears the Phosphoserine; by HPrK/P mark.

The protein belongs to the HPr family.

It localises to the cytoplasm. Its activity is regulated as follows. Phosphorylation on Ser-46 inhibits the phosphoryl transfer from enzyme I to HPr. General (non sugar-specific) component of the phosphoenolpyruvate-dependent sugar phosphotransferase system (sugar PTS). This major carbohydrate active-transport system catalyzes the phosphorylation of incoming sugar substrates concomitantly with their translocation across the cell membrane. The phosphoryl group from phosphoenolpyruvate (PEP) is transferred to the phosphoryl carrier protein HPr by enzyme I. Phospho-HPr then transfers it to the PTS EIIA domain. Its function is as follows. P-Ser-HPr interacts with the catabolite control protein A (CcpA), forming a complex that binds to DNA at the catabolite response elements cre, operator sites preceding a large number of catabolite-regulated genes. Thus, P-Ser-HPr is a corepressor in carbon catabolite repression (CCR), a mechanism that allows bacteria to coordinate and optimize the utilization of available carbon sources. P-Ser-HPr also plays a role in inducer exclusion, in which it probably interacts with several non-PTS permeases and inhibits their transport activity. This is Phosphocarrier protein HPr (ptsH) from Halalkalibacterium halodurans (strain ATCC BAA-125 / DSM 18197 / FERM 7344 / JCM 9153 / C-125) (Bacillus halodurans).